A 43-amino-acid chain; its full sequence is Protein PsbN (43 aa).

Residues 7–27 form a helical membrane-spanning segment; it reads IAIFISCLIVSFTGYALYTAF.

This sequence belongs to the PsbN family.

It is found in the plastid. The protein resides in the chloroplast thylakoid membrane. In terms of biological role, may play a role in photosystem I and II biogenesis. In Psilotum nudum (Whisk fern), this protein is Protein PsbN.